We begin with the raw amino-acid sequence, 153 residues long: Protein E6 (153 aa).

Zinc fingers lie at residues 29 to 65 (CVYC…CEKC) and 102 to 138 (CYIC…CMNC).

This sequence belongs to the papillomaviridae E6 protein family. Forms homodimers. Interacts with ubiquitin-protein ligase UBE3A/E6-AP; this interaction stimulates UBE3A ubiquitin activity. Interacts with host TP53 and EP300; this interaction inhibits TP53 activity.

The protein resides in the host cytoplasm. It is found in the host nucleus. Plays a major role in the induction and maintenance of cellular transformation. E6 associates with host UBE3A/E6-AP ubiquitin-protein ligase and modulates its activity. Sequesters tumor suppressor TP53 in the host cytoplasm and modulates its activity by interacting with host EP300 that results in the reduction of TP53 acetylation and activation. In turn, apoptosis induced by DNA damage is inhibited. E6 also protects host keratinocytes from apoptosis by mediating the degradation of host BAK1. May also inhibit host immune response. The chain is Protein E6 from Homo sapiens (Human).